A 427-amino-acid polypeptide reads, in one-letter code: Septin-8-B (427 aa).

The region spanning 39–305 (QGFCFNILCV…ELYRRCKLEE (267 aa)) is the Septin-type G domain. The G1 motif stretch occupies residues 49–56 (GETGIGKS). Residues 49 to 56 (GETGIGKS), Gly104, 185 to 193 (KADTISKSE), Gly239, and Arg254 each bind GTP. A G3 motif region spans residues 101-104 (DTVG). Positions 184–187 (AKAD) are G4 motif. Residues 320-407 (LQETYEAKRK…RRKVAMETLQ (88 aa)) adopt a coiled-coil conformation. A compositionally biased stretch (polar residues) spans 406–418 (LQSQSFQATSQQP). The disordered stretch occupies residues 406–427 (LQSQSFQATSQQPLKKDKDRKN).

Belongs to the TRAFAC class TrmE-Era-EngA-EngB-Septin-like GTPase superfamily. Septin GTPase family.

This Xenopus laevis (African clawed frog) protein is Septin-8-B (sept8-b).